A 558-amino-acid polypeptide reads, in one-letter code: AP2-like ethylene-responsive transcription factor AIL5 (558 aa).

Positions 1–54 (MKNNNNKSSSSSSYDSSLSPSSSSSSHQNWLSFSLSNNNNNFNSSSNPNLTSST) are enriched in low complexity. Disordered stretches follow at residues 1–65 (MKNN…PSHL), 74–93 (SPVE…ATAV), and 166–195 (HSSE…KNVE). 2 DNA-binding regions (AP2/ERF) span residues 203–269 (IYRG…TNFP) and 305–363 (MYRG…TNFD). The interval 387–406 (SPATAAADKTVDLSPSDSPS) is disordered.

The protein belongs to the AP2/ERF transcription factor family. AP2 subfamily. As to expression, expressed in roots, seedlings, inflorescence, and siliques. Also detected at low levels in leaves.

The protein resides in the nucleus. Probably acts as a transcriptional activator. Binds to the GCC-box pathogenesis-related promoter element. May be involved in the regulation of gene expression by stress factors and by components of stress signal transduction pathways. Involved in the regulation of floral organs size. The chain is AP2-like ethylene-responsive transcription factor AIL5 from Arabidopsis thaliana (Mouse-ear cress).